Reading from the N-terminus, the 106-residue chain is ATP-dependent Clp protease adapter protein ClpS (106 aa).

The protein belongs to the ClpS family. In terms of assembly, binds to the N-terminal domain of the chaperone ClpA.

Its function is as follows. Involved in the modulation of the specificity of the ClpAP-mediated ATP-dependent protein degradation. The chain is ATP-dependent Clp protease adapter protein ClpS from Vibrio parahaemolyticus serotype O3:K6 (strain RIMD 2210633).